Reading from the N-terminus, the 486-residue chain is Putative ankyrin repeat protein R634 (486 aa).

ANK repeat units lie at residues 84-113 (DLFKYVIEFCISGKLDSIKRLVSMGANVRE), 114-143 (HNDVALNRAVENGHMDIFEYLISKGADLYA), 145-173 (KNTLVRCASYGGNLDMVKYLISIGANFRE), 174-203 (NCDTPLIWACHNGHLEIVKYLVDQGADVNS), 205-233 (SHKSIITASKMGHLGIVKYLVSKTTNIDW), 234-263 (RHNYAAAFAAQNNHLEIVKYLVNEGANLEI), 265-293 (DGCIIRVAAKNGHLDIVKYLVSLGMEIGF), 307-336 (NKITPVIGSAVEGGHLSMVKYFVSIGATIK), 337-366 (EKNYAFVKAAEYGHLEIIKYLVSQGISLEK), 367-396 (KINKALIVACSKGHLEIVKYLVENGANVKT), 398-426 (EGLPLRQACWGNYLDIAKYLVSNGADVTS), and 427-456 (YDNYALKTALEKGDLETVKYFIYVGANVND).

This is Putative ankyrin repeat protein R634 from Acanthamoeba polyphaga (Amoeba).